A 474-amino-acid polypeptide reads, in one-letter code: UDP-glycosyltransferase 71C2 (474 aa).

UDP-alpha-D-glucose contacts are provided by residues S293, 352–354, 369–377, and 391–394; these read APQ, HCGWNSILE, and YAEQ.

Belongs to the UDP-glycosyltransferase family.

Its function is as follows. Possesses low quercetin 3-O-glucosyltransferase, 7-O-glucosyltransferase and 3'-O-glucosyltransferase activities in vitro. Glucosylates other secondary metabolites in vitro like vanillin, trans-resveratrol, curumin and etoposide. This is UDP-glycosyltransferase 71C2 (UGT71C2) from Arabidopsis thaliana (Mouse-ear cress).